A 408-amino-acid polypeptide reads, in one-letter code: Putative glutamate--cysteine ligase 2 (408 aa).

This sequence belongs to the glutamate--cysteine ligase type 2 family. YbdK subfamily.

The catalysed reaction is L-cysteine + L-glutamate + ATP = gamma-L-glutamyl-L-cysteine + ADP + phosphate + H(+). Functionally, ATP-dependent carboxylate-amine ligase which exhibits weak glutamate--cysteine ligase activity. The chain is Putative glutamate--cysteine ligase 2 from Bradyrhizobium sp. (strain ORS 278).